The sequence spans 482 residues: E1B 55 kDa protein (482 aa).

Residues Val73–Ser94 form a disordered region. A compositionally biased stretch (basic and acidic residues) spans Ala83–Ser94. 2 positions are modified to phosphoserine: Ser476 and Ser477.

The protein belongs to the adenoviridae E1B 55 kDa protein family. In terms of assembly, interacts with host PML-4 and PML-5; this interaction promotes efficient subnuclear targeting of E1B-55K to PML nuclear bodies. Interacts with E4-ORF3 protein. Interacts with E4-ORF6 protein.

The protein resides in the host nucleus. Its subcellular location is the host cytoplasm. Its function is as follows. Plays a major role to prevent cellular inhibition of viral genome replication. Assembles an SCF-like E3 ubiquitin ligase complex based on the cellular proteins ELOB, ELOC, CUL5 and RBX1, in cooperation with viral E4orf6. This viral RING-type ligase ubiquitinates cellular substrates and targets them to proteasomal degradation: TP53/p53, LIG4, MRE11-RAD50-NBS1 (MRN) complex, ITGA3, DAXX and BLM. E1B-55K probably acts as the substrate-specific adapter of the SCF-like E3 ubiquitin ligase complex. Degradation of host TP53/p53 activity is essential for preventing E1A-induced TP53 accumulation that would otherwise lead to cell apoptosis and growth arrest. E1B-55K also inactivates TP53 transcription-factor activity by binding its transactivation domain. E1B-55K also functions as a SUMO1 E3 ligase for TP53 which causes the latter to be sequestered in promyelocytic leukemia (PML) nuclear bodies thereby contributing to maximal inhibition of TP53 function. The protein is E1B 55 kDa protein of Homo sapiens (Human).